We begin with the raw amino-acid sequence, 136 residues long: Small ribosomal subunit protein uS9 (136 aa).

The interval 111 to 136 is disordered; that stretch reads DARRTEPHKPSRSTKGPRAKRQKSYR. The segment covering 120–136 has biased composition (basic residues); the sequence is PSRSTKGPRAKRQKSYR.

The protein belongs to the universal ribosomal protein uS9 family.

In Methanocaldococcus jannaschii (strain ATCC 43067 / DSM 2661 / JAL-1 / JCM 10045 / NBRC 100440) (Methanococcus jannaschii), this protein is Small ribosomal subunit protein uS9 (rps9).